The chain runs to 520 residues: Probable alginate O-acetylase AlgI (520 aa).

The next 10 membrane-spanning stretches (helical) occupy residues 7-24, 39-61, 78-100, 115-137, 150-172, 239-261, 311-333, 353-375, 402-424, and 483-505; these read VFLF…YLSG, FYAW…NYWI, WLIL…NFGV, FVLT…ISYI, NLID…VLRF, LYFD…GFRF, LFLT…IWGA, VLNP…IFRA, ANLT…FFGL, and WLSQ…ASVL. His-322 is an active-site residue.

This sequence belongs to the membrane-bound acyltransferase family.

Its subcellular location is the cell inner membrane. Its pathway is glycan biosynthesis; alginate biosynthesis. In terms of biological role, together with AlgJ and AlgF, forms an inner membrane complex which probably interacts with the alginate polymerization-transport complex and adds acetyl groups at the O-2 and O-3 positions of mannuronate residues. Acetylation of alginate is important for the architecture of biofilms and increases resistance to opsonic killing in the host. The protein is Probable alginate O-acetylase AlgI (algI) of Pseudomonas aeruginosa (strain ATCC 15692 / DSM 22644 / CIP 104116 / JCM 14847 / LMG 12228 / 1C / PRS 101 / PAO1).